The following is a 552-amino-acid chain: Formate--tetrahydrofolate ligase (552 aa).

An ATP-binding site is contributed by Thr-62–Ser-69.

It belongs to the formate--tetrahydrofolate ligase family.

It carries out the reaction (6S)-5,6,7,8-tetrahydrofolate + formate + ATP = (6R)-10-formyltetrahydrofolate + ADP + phosphate. It functions in the pathway one-carbon metabolism; tetrahydrofolate interconversion. In Ligilactobacillus salivarius (strain UCC118) (Lactobacillus salivarius), this protein is Formate--tetrahydrofolate ligase.